The primary structure comprises 723 residues: Hypoxia-inducible factor prolyl hydroxylase (723 aa).

Zn(2+) contacts are provided by Cys39, Cys42, Cys54, Cys57, Cys63, His67, His75, and Cys79. The MYND-type; atypical zinc finger occupies 39–79 (CTYCGSSCTSSQLQTCLFCGTVAYCSKEHQQLDWLTHKMIC). Over residues 249-270 (PSTASTATIPPPATTTSSATSS) the composition is skewed to low complexity. 2 disordered regions span residues 249-275 (PSTASTATIPPPATTTSSATSSGKSET) and 294-323 (IETEGGSKPTVSRTRKRPTPSNSADPKINY). In terms of domain architecture, Fe2OG dioxygenase spans 468–566 (GRSRAMLAIY…RFAITIWYMD (99 aa)). Residues His487, Asp489, and His548 each contribute to the Fe cation site. Arg557 is a 2-oxoglutarate binding site. Residues 678–723 (RTTSLQSISDHFRSERSHERRSSTSSDQDLDEGLPPPPSTNPEYYI) form a disordered region. The segment covering 687-699 (DHFRSERSHERRS) has biased composition (basic and acidic residues).

As to quaternary structure, interacts (via catalytic domain) with lin-10 (via N-terminus); the interaction regulates lin-10 subcellular localization; the interaction is direct. Interacts (via catalytic domain) with swan-1 (via WD 1-3 repeats); the interaction may regulate vhl-1-independent hif-1 transcriptional activity; the interaction is direct. Interacts (via C-terminus) with cysl-1; the interaction is enhanced by hydrogen disulfide and activates hif-1-mediated transcription; the interaction is direct. Requires Fe(2+) as cofactor. L-ascorbate is required as a cofactor. As to expression, in larvae and adults, expressed in pharyngeal and body wall muscles.

It is found in the cytoplasm. It localises to the nucleus. Its subcellular location is the cell projection. The protein resides in the dendrite. The protein localises to the axon. It catalyses the reaction L-prolyl-[hypoxia-inducible factor alpha subunit] + 2-oxoglutarate + O2 = trans-4-hydroxy-L-prolyl-[hypoxia-inducible factor alpha subunit] + succinate + CO2. With respect to regulation, inhibited by Co(2+) and dimethyloxalylglycine. Inhibited by the iron chelator 2, 2'-dipyridyl. Cellular oxygen sensor which regulates the stability and the activity of hypoxia-inducible transcription factor, hif-1. In normoxic conditions, hydroxylates hif-1 targeting it for vhl-1-mediated proteasomal degradation. In addition, regulates hif-1 transcriptional activity in a vhl-1-independent manner and independently of its hydroxylase activity. By regulating hif-1 activity, controls several cellular responses. Mediates susceptibility to B.thuringiensis and V.cholerae pore-forming toxins and enteropathogenic E.coli. Mediates susceptibility to P.aeruginosa PAO1-mediated killing by regulating resistance to cyanide produced by P.aeruginosa. Mediates resistance to S.aureus-mediated killing. In addition, plays a role in heat acclimation, neuronal development, behavioral responses to reoxygenation and hydrogen sulfide, iron homeostasis and aging. In neurons, involved in mitochondrion fusion during reoxygenation. Involved in egg laying. Functionally, regulates the trafficking of the glutamate receptor glr-1, probably independently of hif-1, by regulating lin-10 subcellular localization in response to oxygen levels. May hydroxylate lin-10. The protein is Hypoxia-inducible factor prolyl hydroxylase of Caenorhabditis elegans.